The primary structure comprises 288 residues: Probable HTH-type transcriptional regulator STM3175 (288 aa).

The 100-residue stretch at 14–113 (RRVCDHIERH…GQSPRRFRQS (100 aa)) folds into the HTH araC/xylS-type domain. 2 consecutive DNA-binding regions (H-T-H motif) follow at residues 31–52 (EALS…TTWS) and 80–103 (VIDI…KTAF). A putative effector binding domain; binds the peptide antibiotic albicidin region spans residues 111–288 (RQSPDWLAWH…LLTDIYLPLR (178 aa)).

As to quaternary structure, homodimer.

In terms of biological role, probable transcription factor. The protein is Probable HTH-type transcriptional regulator STM3175 of Salmonella typhimurium (strain LT2 / SGSC1412 / ATCC 700720).